Consider the following 708-residue polypeptide: G-box-binding factor (708 aa).

2 disordered regions span residues 1–29 and 123–339; these read MLST…GSDL and QQAQ…QTIP. 3 stretches are compositionally biased toward low complexity: residues 11–21, 123–219, and 227–316; these read SSSSSSSSSPS, QQAQ…QHHQ, and SQPQ…SPST. The segment covering 324–333 has biased composition (basic and acidic residues); that stretch reads ETSNSEKKDS. 2 repeat units span residues 339 to 368 and 481 to 510. The segment at 511 to 604 is disordered; sequence VGAGLSPSSS…PTYSPNPSLP (94 aa). Residues 516–590 show a composition bias toward low complexity; it reads SPSSSPSSPK…SSISQSPLQL (75 aa). The segment covering 591-600 has biased composition (polar residues); it reads NYQTPTYSPN.

Its subcellular location is the nucleus. In terms of biological role, cAMP-responsive transcriptional activator regulating late gene expression. Essential component of the developmental switch between early and late development. Binds to a number of CA/GT-rich gene regulatory elements. This Dictyostelium discoideum (Social amoeba) protein is G-box-binding factor (gbfA).